A 62-amino-acid polypeptide reads, in one-letter code: Large ribosomal subunit protein bL28 (62 aa).

The protein belongs to the bacterial ribosomal protein bL28 family.

In Streptococcus agalactiae serotype Ia (strain ATCC 27591 / A909 / CDC SS700), this protein is Large ribosomal subunit protein bL28.